Reading from the N-terminus, the 70-residue chain is uncharacterized protein (70 aa).

This is an uncharacterized protein from Vaccinia virus (strain Copenhagen) (VACV).